Reading from the N-terminus, the 59-residue chain is Large ribosomal subunit protein bL33 (59 aa).

This sequence belongs to the bacterial ribosomal protein bL33 family.

The sequence is that of Large ribosomal subunit protein bL33 from Prosthecochloris aestuarii (strain DSM 271 / SK 413).